Reading from the N-terminus, the 319-residue chain is Protein quaking-B (319 aa).

The region spanning 87–153 (YVPVKEYPDF…WEHLNEDLHV (67 aa)) is the KH domain. The SH3-binding motif lies at 276–279 (PQTP).

It belongs to the quaking family. In terms of assembly, homodimer; does not require RNA to homodimerize.

It is found in the cytoplasm. The protein resides in the nucleus. RNA reader protein, which recognizes and binds specific RNAs, thereby regulating RNA metabolic processes, such as pre-mRNA splicing, circular RNA (circRNA) formation, mRNA export, mRNA stability and/or translation. Involved in various cellular processes, such as mRNA storage into stress granules, apoptosis, interferon response, glial cell fate and development. Binds to the 5'-NACUAAY-N(1,20)-UAAY-3' RNA core sequence. Acts as a mRNA modification reader that specifically recognizes and binds mRNA transcripts modified by internal N(7)-methylguanine (m7G). Promotes the formation of circular RNAs (circRNAs): acts by binding to sites flanking circRNA-forming exons. CircRNAs are produced by back-splicing circularization of pre-mRNAs. Required to protect and promote stability of mRNAs which promotes oligodendrocyte differentiation. Acts as an important regulator of muscle development: required during early skeletal myofibril formation by regulating the accumulation of the muscle-specific tropomyosin-3 (tpm3) transcripts. This Danio rerio (Zebrafish) protein is Protein quaking-B (qki2).